Consider the following 348-residue polypeptide: Probable dual-specificity RNA methyltransferase RlmN (348 aa).

Catalysis depends on Glu93, which acts as the Proton acceptor. A Radical SAM core domain is found at 99–333 (TEKRLTACLS…VSLRKSRGLD (235 aa)). An intrachain disulfide couples Cys106 to Cys338. [4Fe-4S] cluster contacts are provided by Cys113, Cys117, and Cys120. S-adenosyl-L-methionine-binding positions include 160-161 (GE), Ser190, 219-221 (SLH), and Asn295. Residue Cys338 is the S-methylcysteine intermediate of the active site.

The protein belongs to the radical SAM superfamily. RlmN family. The cofactor is [4Fe-4S] cluster.

Its subcellular location is the cytoplasm. It catalyses the reaction adenosine(2503) in 23S rRNA + 2 reduced [2Fe-2S]-[ferredoxin] + 2 S-adenosyl-L-methionine = 2-methyladenosine(2503) in 23S rRNA + 5'-deoxyadenosine + L-methionine + 2 oxidized [2Fe-2S]-[ferredoxin] + S-adenosyl-L-homocysteine. The catalysed reaction is adenosine(37) in tRNA + 2 reduced [2Fe-2S]-[ferredoxin] + 2 S-adenosyl-L-methionine = 2-methyladenosine(37) in tRNA + 5'-deoxyadenosine + L-methionine + 2 oxidized [2Fe-2S]-[ferredoxin] + S-adenosyl-L-homocysteine. In terms of biological role, specifically methylates position 2 of adenine 2503 in 23S rRNA and position 2 of adenine 37 in tRNAs. This is Probable dual-specificity RNA methyltransferase RlmN from Prochlorococcus marinus (strain MIT 9215).